The chain runs to 199 residues: Fe/S biogenesis protein NfuA (199 aa).

Residues cysteine 156 and cysteine 159 each coordinate [4Fe-4S] cluster.

It belongs to the NfuA family. In terms of assembly, homodimer. [4Fe-4S] cluster is required as a cofactor.

Functionally, involved in iron-sulfur cluster biogenesis. Binds a 4Fe-4S cluster, can transfer this cluster to apoproteins, and thereby intervenes in the maturation of Fe/S proteins. Could also act as a scaffold/chaperone for damaged Fe/S proteins. This chain is Fe/S biogenesis protein NfuA, found in Actinobacillus pleuropneumoniae serotype 5b (strain L20).